An 82-amino-acid polypeptide reads, in one-letter code: UPF0180 protein BT9727_1277 (82 aa).

The protein belongs to the UPF0180 family.

The protein is UPF0180 protein BT9727_1277 of Bacillus thuringiensis subsp. konkukian (strain 97-27).